Consider the following 264-residue polypeptide: uncharacterized protein (264 aa).

A helical transmembrane segment spans residues leucine 9–isoleucine 29.

The protein localises to the membrane. This is an uncharacterized protein from Ureaplasma parvum serovar 3 (strain ATCC 700970).